The following is a 1064-amino-acid chain: WD repeat-containing protein on Y chromosome (1064 aa).

WD repeat units lie at residues 153–197 (EEVT…IRTA), 326–365 (RVPL…EPSA), 369–408 (GHNG…LLQT), 459–498 (THAA…RKII), 511–550 (IIDI…VVRN), 598–638 (FHTD…RRYS), 746–785 (KTGD…EAEK), and 827–866 (AHLK…LGTL). Residues 914 to 924 (PAKRAEVKAPE) show a composition bias toward basic and acidic residues. Disordered regions lie at residues 914–935 (PAKR…QTDD) and 1023–1064 (GSAL…QQSE). The segment covering 925–935 (DRDEETAQTDD) has biased composition (acidic residues).

The polypeptide is WD repeat-containing protein on Y chromosome (Drosophila pseudoobscura pseudoobscura (Fruit fly)).